The sequence spans 385 residues: Citrate synthase (385 aa).

Residues H223, H263, and D318 contribute to the active site.

The protein belongs to the citrate synthase family. Homodimer.

The enzyme catalyses oxaloacetate + acetyl-CoA + H2O = citrate + CoA + H(+). The protein operates within carbohydrate metabolism; tricarboxylic acid cycle; isocitrate from oxaloacetate: step 1/2. Its activity is regulated as follows. Allosterically inhibited by NADH. This Thermoplasma acidophilum (strain ATCC 25905 / DSM 1728 / JCM 9062 / NBRC 15155 / AMRC-C165) protein is Citrate synthase (gltA).